The chain runs to 265 residues: MNDMSRVERAVESKQTKMECRDCHVYYGDTHAIKNVNVDIADKTVTAFIGPSGCGKSTFLRCLNRMNDTIAGARVQGSFQLDGEDIYDKRVDPVQLRAKVGMVFQKPNPFPKSIYDNVAYGPRIHGLARNRAEMDEIVEKALRRGAIWDEVKDRLDAPGTGLSGGQQQRLCIARAIATEPEVLLMDEPCSALDPIATAQVEELIDELRQNYSVVIVTHSMQQAARVSQKTAFFHLGQLVEYGETGQIFTNPEDPRTESYITGRIG.

One can recognise an ABC transporter domain in the interval 18–260; it reads MECRDCHVYY…PEDPRTESYI (243 aa). 50 to 57 contributes to the ATP binding site; the sequence is GPSGCGKS.

Belongs to the ABC transporter superfamily. Phosphate importer (TC 3.A.1.7) family. In terms of assembly, the complex is composed of two ATP-binding proteins (PstB), two transmembrane proteins (PstC and PstA) and a solute-binding protein (PstS).

The protein resides in the cell inner membrane. The catalysed reaction is phosphate(out) + ATP + H2O = ADP + 2 phosphate(in) + H(+). Its function is as follows. Part of the ABC transporter complex PstSACB involved in phosphate import. Responsible for energy coupling to the transport system. The chain is Phosphate import ATP-binding protein PstB from Ruegeria pomeroyi (strain ATCC 700808 / DSM 15171 / DSS-3) (Silicibacter pomeroyi).